We begin with the raw amino-acid sequence, 335 residues long: Biotin synthase (335 aa).

Residues 51–278 form the Radical SAM core domain; that stretch reads NTVQLSSLLS…LAKVRLSAGR (228 aa). Residues Cys66, Cys70, and Cys73 each contribute to the [4Fe-4S] cluster site. [2Fe-2S] cluster is bound by residues Cys110, Cys141, Cys201, and Arg273.

Belongs to the radical SAM superfamily. Biotin synthase family. As to quaternary structure, homodimer. It depends on [4Fe-4S] cluster as a cofactor. [2Fe-2S] cluster is required as a cofactor.

The catalysed reaction is (4R,5S)-dethiobiotin + (sulfur carrier)-SH + 2 reduced [2Fe-2S]-[ferredoxin] + 2 S-adenosyl-L-methionine = (sulfur carrier)-H + biotin + 2 5'-deoxyadenosine + 2 L-methionine + 2 oxidized [2Fe-2S]-[ferredoxin]. Its pathway is cofactor biosynthesis; biotin biosynthesis; biotin from 7,8-diaminononanoate: step 2/2. Functionally, catalyzes the conversion of dethiobiotin (DTB) to biotin by the insertion of a sulfur atom into dethiobiotin via a radical-based mechanism. The chain is Biotin synthase from Bordetella bronchiseptica (strain ATCC BAA-588 / NCTC 13252 / RB50) (Alcaligenes bronchisepticus).